We begin with the raw amino-acid sequence, 278 residues long: S-formylglutathione hydrolase YeiG (278 aa).

Catalysis depends on charge relay system residues Ser-145, Asp-223, and His-256.

This sequence belongs to the esterase D family.

The enzyme catalyses S-formylglutathione + H2O = formate + glutathione + H(+). Its function is as follows. Serine hydrolase involved in the detoxification of formaldehyde. Hydrolyzes S-formylglutathione to glutathione and formate. The protein is S-formylglutathione hydrolase YeiG (yeiG) of Shigella dysenteriae serotype 1 (strain Sd197).